The primary structure comprises 467 residues: MSLHLYNTLHRRVEPFEPLDPACPTMYVCGPTVYNYVHIGNARGPVVFGVLAALLRRRYGALRYARNITDVDDKINTAAQEQGVPISAITERFCAAYREDMKKLGVEPPDIEPEATAHMPQIIAMIEQLIERQHAYVAMEHVLFAVNSFADYGQLSRRDTEEMLAGARVEIAPYKRDPSDFVLWKPSSDQLPGWDSPWGRGRPGWHIECSAMAAAHLGETIDIHAGGIDLQFPHHENEIAQSRCAHGSSTFARVWMHNGMLNFEGAKMSKSLGNIETVHELVAKHPPEALRYALLSAHYRKPLDWSEALIAQSVRTLNRLYGTLRDLAAYPARAIIPGNIEAALDDDLNTPQALAELATLANEARIQLADTTHHAAAEVTTALTRLKAKLLGAGLALGLLQQTPEAWFSQGTNESDETHIQALIDARGAAKQARDFVRADAIRAQLAAEGIVLEDTPQGVRWMKQHT.

Cysteine 29 provides a ligand contact to Zn(2+). Residues 31–41 (PTVYNYVHIGN) carry the 'HIGH' region motif. 3 residues coordinate Zn(2+): cysteine 209, histidine 234, and glutamate 238. A 'KMSKS' region motif is present at residues 267 to 271 (KMSKS). Residue lysine 270 coordinates ATP.

It belongs to the class-I aminoacyl-tRNA synthetase family. As to quaternary structure, monomer. It depends on Zn(2+) as a cofactor.

Its subcellular location is the cytoplasm. It carries out the reaction tRNA(Cys) + L-cysteine + ATP = L-cysteinyl-tRNA(Cys) + AMP + diphosphate. This is Cysteine--tRNA ligase from Xylella fastidiosa (strain Temecula1 / ATCC 700964).